Here is a 208-residue protein sequence, read N- to C-terminus: Probable nicotinate-nucleotide adenylyltransferase (208 aa).

Belongs to the NadD family.

The catalysed reaction is nicotinate beta-D-ribonucleotide + ATP + H(+) = deamido-NAD(+) + diphosphate. The protein operates within cofactor biosynthesis; NAD(+) biosynthesis; deamido-NAD(+) from nicotinate D-ribonucleotide: step 1/1. In terms of biological role, catalyzes the reversible adenylation of nicotinate mononucleotide (NaMN) to nicotinic acid adenine dinucleotide (NaAD). The chain is Probable nicotinate-nucleotide adenylyltransferase from Acidothermus cellulolyticus (strain ATCC 43068 / DSM 8971 / 11B).